Reading from the N-terminus, the 300-residue chain is Cation-efflux pump FieF (300 aa).

The next 4 helical transmembrane spans lie at 12 to 32, 39 to 59, 82 to 102, and 114 to 134; these read AAIAATAMASLLLLIKIFAWW, ILAALVDSLVDIGASLTNLLV, AALAQSMFISGSALFLFLTGI, and PGVGVIVTIVALICTIILVSF. Residues Asp-45 and Asp-49 each contribute to the Zn(2+) site. Positions 153 and 157 each coordinate Zn(2+). The next 2 helical transmembrane spans lie at 156 to 176 and 178 to 198; these read SDVMMNGAILLALGLSWYGWH and ADALFALGIGIYILYSALRMG.

The protein belongs to the cation diffusion facilitator (CDF) transporter (TC 2.A.4) family. FieF subfamily. Homodimer.

The protein localises to the cell inner membrane. The catalysed reaction is Zn(2+)(in) + H(+)(out) = Zn(2+)(out) + H(+)(in). It catalyses the reaction Cd(2+)(in) + H(+)(out) = Cd(2+)(out) + H(+)(in). The enzyme catalyses Fe(2+)(in) + H(+)(out) = Fe(2+)(out) + H(+)(in). Its function is as follows. Divalent metal cation transporter which exports Zn(2+), Cd(2+) and possibly Fe(2+). May be involved in zinc and iron detoxification by efflux. The chain is Cation-efflux pump FieF from Escherichia coli O7:K1 (strain IAI39 / ExPEC).